A 316-amino-acid chain; its full sequence is Probable inactive poly [ADP-ribose] polymerase SRO4 (316 aa).

The segment at 1–28 (MDYSKTEETPINEEQGSTNSSESRSNEE) is disordered. Positions 14–23 (EQGSTNSSES) are enriched in low complexity. Residues 28–255 (ELFSDCDQQH…KSPWISFPVL (228 aa)) enclose the PARP catalytic domain. An RST domain is found at 243-314 (KNPKSPWISF…IKSVGQKVHK (72 aa)).

It localises to the nucleus. Functionally, probable inactive ADP-ribosyltransferase that may be involved in stress and developmental responses. The protein is Probable inactive poly [ADP-ribose] polymerase SRO4 (SRO4) of Arabidopsis thaliana (Mouse-ear cress).